The chain runs to 209 residues: Protease (209 aa).

Catalysis depends on residues H55, D72, and C123.

Belongs to the peptidase C5 family. As to quaternary structure, interacts with protease cofactor pVI-C; this interaction is necessary for protease activation.

Its subcellular location is the virion. It localises to the host nucleus. It carries out the reaction Cleaves proteins of the adenovirus and its host cell at two consensus sites: -Yaa-Xaa-Gly-Gly-|-Xaa- and -Yaa-Xaa-Gly-Xaa-|-Gly- (in which Yaa is Met, Ile or Leu, and Xaa is any amino acid).. With respect to regulation, requires DNA and protease cofactor for maximal activation. Inside nascent virions, becomes partially activated by binding to the viral DNA, allowing it to cleave the cofactor that binds to the protease and fully activates it. Actin, like the viral protease cofactor, seems to act as a cofactor in the cleavage of cytokeratin 18 and of actin itself. Functionally, cleaves viral precursor proteins (pTP, pIIIa, pVI, pVII, pVIII, and pX) inside newly assembled particles giving rise to mature virions. Protease complexed to its cofactor slides along the viral DNA to specifically locate and cleave the viral precursors. Mature virions have a weakened organization compared to the unmature virions, thereby facilitating subsequent uncoating. Without maturation, the particle lacks infectivity and is unable to uncoat. Late in adenovirus infection, in the cytoplasm, may participate in the cytoskeleton destruction. Cleaves host cell cytoskeletal keratins K7 and K18. In Human adenovirus D serotype 9 (HAdV-9), this protein is Protease.